We begin with the raw amino-acid sequence, 301 residues long: MSSFGKVAVLFGGTSAEREVSLNSGSRVLAALQGQGIDAHAFDPAEQPLDALKGYDRAFIALHGRHGEDGTIQGALEVMHIPYTGSGVLASALAMDKFRTKLMWRAAGLAIPEYALLTADSDFADIEEELGLPLFVKPAREGSSIGVTKVKERGALKAAYEEAARHDPLVIAEKGVMGGEYTVGIIGDEAMPIIKIEPATEWYDYEAKYNRDDTRYLCPCGLPEAKEMEIRKGALEAFRILGGRGWGRVDFLMDEDGKYYFLEVNTAPGMTDHSLVPMAARVNGMDYPTLVRRVLELAAND.

An ATP-grasp domain is found at 101 to 296; the sequence is KLMWRAAGLA…YPTLVRRVLE (196 aa). 127–182 contacts ATP; it reads EEELGLPLFVKPAREGSSIGVTKVKERGALKAAYEEAARHDPLVIAEKGVMGGEYT. 3 residues coordinate Mg(2+): Asp250, Glu263, and Asn265.

This sequence belongs to the D-alanine--D-alanine ligase family. Mg(2+) serves as cofactor. It depends on Mn(2+) as a cofactor.

Its subcellular location is the cytoplasm. It carries out the reaction 2 D-alanine + ATP = D-alanyl-D-alanine + ADP + phosphate + H(+). It functions in the pathway cell wall biogenesis; peptidoglycan biosynthesis. Functionally, cell wall formation. This chain is D-alanine--D-alanine ligase, found in Dechloromonas aromatica (strain RCB).